A 470-amino-acid chain; its full sequence is Glutamate--tRNA ligase (470 aa).

A 'HIGH' region motif is present at residues 9–19; the sequence is PSPTGYLHVGG. Residues 236–240 carry the 'KMSKS' region motif; sequence RLSKR. Lys-239 is a binding site for ATP.

It belongs to the class-I aminoacyl-tRNA synthetase family. Glutamate--tRNA ligase type 1 subfamily. In terms of assembly, monomer.

The protein resides in the cytoplasm. The enzyme catalyses tRNA(Glu) + L-glutamate + ATP = L-glutamyl-tRNA(Glu) + AMP + diphosphate. Catalyzes the attachment of glutamate to tRNA(Glu) in a two-step reaction: glutamate is first activated by ATP to form Glu-AMP and then transferred to the acceptor end of tRNA(Glu). The polypeptide is Glutamate--tRNA ligase (Colwellia psychrerythraea (strain 34H / ATCC BAA-681) (Vibrio psychroerythus)).